Here is a 168-residue protein sequence, read N- to C-terminus: Photosystem I assembly protein Ycf3 (168 aa).

3 TPR repeats span residues 35 to 68, 72 to 105, and 120 to 153; these read AFTYYRDGMSAQSEGNYAEALQNYYEAMRLEIDP, SYILYNIGLIHTSNGEHTKALEYYFRALERNPFL, and GEQAIRQGDSEIAEAWFDQAAEYWKQAMALTPGN.

The protein belongs to the Ycf3 family.

The protein localises to the plastid. It is found in the chloroplast thylakoid membrane. Essential for the assembly of the photosystem I (PSI) complex. May act as a chaperone-like factor to guide the assembly of the PSI subunits. The sequence is that of Photosystem I assembly protein Ycf3 from Panax ginseng (Korean ginseng).